Here is a 296-residue protein sequence, read N- to C-terminus: ATP synthase gamma chain (296 aa).

It belongs to the ATPase gamma chain family. As to quaternary structure, F-type ATPases have 2 components, CF(1) - the catalytic core - and CF(0) - the membrane proton channel. CF(1) has five subunits: alpha(3), beta(3), gamma(1), delta(1), epsilon(1). CF(0) has three main subunits: a, b and c.

The protein localises to the cell inner membrane. In terms of biological role, produces ATP from ADP in the presence of a proton gradient across the membrane. The gamma chain is believed to be important in regulating ATPase activity and the flow of protons through the CF(0) complex. This chain is ATP synthase gamma chain, found in Jannaschia sp. (strain CCS1).